Consider the following 153-residue polypeptide: Ribonuclease H (153 aa).

The 142-residue stretch at 1 to 142 (MTDQIEIFTD…ADELARRGVD (142 aa)) folds into the RNase H type-1 domain. Mg(2+) contacts are provided by Asp-10, Glu-48, Asp-70, and Asp-134.

It belongs to the RNase H family. In terms of assembly, monomer. Mg(2+) is required as a cofactor.

The protein resides in the cytoplasm. The enzyme catalyses Endonucleolytic cleavage to 5'-phosphomonoester.. In terms of biological role, endonuclease that specifically degrades the RNA of RNA-DNA hybrids. This chain is Ribonuclease H, found in Aromatoleum aromaticum (strain DSM 19018 / LMG 30748 / EbN1) (Azoarcus sp. (strain EbN1)).